The chain runs to 682 residues: Solute carrier organic anion transporter family member 2B1 (682 aa).

A disordered region spans residues 1-30 (MPDRSTKATMGAEDIHERKVSMEPRDSHQD). Residues 1-41 (MPDRSTKATMGAEDIHERKVSMEPRDSHQDAQPRGMFQNIK) are Cytoplasmic-facing. Over residues 13-30 (EDIHERKVSMEPRDSHQD) the composition is skewed to basic and acidic residues. Serine 21 is modified (phosphoserine). The helical transmembrane segment at 42-61 (FFVLCHSILQLAQLMISGYL) threads the bilayer. Residues 62–80 (KSSISTVEKRFGLSSQTSG) are Extracellular-facing. The helical transmembrane segment at 81–101 (LLAAFNEVGNISLILFVSYFG) threads the bilayer. Topologically, residues 102-107 (SRVHRP) are cytoplasmic. A helical membrane pass occupies residues 108-132 (RMIGCGAILVAVAGLLMALPHFISE). At 133-176 (PYRYDHSSPDRSQDFEASLCLPTTMAPASALSNDSCSSRTETKH) the chain is on the extracellular side. Residue asparagine 165 is glycosylated (N-linked (GlcNAc...) asparagine). A helical transmembrane segment spans residues 177–206 (LTMVGIMFTAQTLLGIGGVPIQPFGISYID). The Cytoplasmic segment spans residues 207–225 (DFAHHSNSPLYLGILFAIT). Residues 226–246 (MMGPGLAYGLGSLMLRLYVDI) traverse the membrane as a helical segment. The Extracellular segment spans residues 247–264 (DRMPEGGINLTTKDPRWV). Asparagine 255 carries N-linked (GlcNAc...) asparagine glycosylation. A helical transmembrane segment spans residues 265 to 289 (GAWWLGFLISAGLVVLAASPYFFFP). The Cytoplasmic portion of the chain corresponds to 290–354 (REMPKEKYEL…IKVFPRVLLR (65 aa)). Phosphoserine is present on residues serine 311 and serine 314. A helical transmembrane segment spans residues 355-376 (TLRHPIFLLVVLSQVCTSSMVA). Residues 377–396 (GTATFLPKFLERQFSITASF) lie on the Extracellular side of the membrane. A helical transmembrane segment spans residues 397–420 (ANLLLGCLTIPLAIVGIVVGGVLV). Over 421–424 (KRLH) the chain is Cytoplasmic. Residues 425–448 (LSPMQCSALCLLGSLLCLLLSLPL) traverse the membrane as a helical segment. Topologically, residues 449–552 (FFIGCSTHHI…SACSRLVLPF (104 aa)) are extracellular. In terms of domain architecture, Kazal-like spans 471 to 531 (PSLFPGCSEP…VFYTNCSCVA (61 aa)). Cystine bridges form between cysteine 477/cysteine 508, cysteine 483/cysteine 504, and cysteine 492/cysteine 529. Asparagine 526 and asparagine 533 each carry an N-linked (GlcNAc...) asparagine glycan. A helical membrane pass occupies residues 553–575 (ILLISLGAAVASITHTPSFMLIL). Topologically, residues 576–584 (RGVKKEDKT) are cytoplasmic. A helical membrane pass occupies residues 585 to 610 (LAVGMQFMLLRVLAWMPSPVIHGSAI). The Extracellular portion of the chain corresponds to 611–643 (DTTCVHWALTCGRRAVCRYYDHDLLRNRFIGLQ). Residues 644-661 (FFFKSGSLVCFALVLAIL) form a helical membrane-spanning segment. Over 662 to 682 (RQQSREASTKATVKSSDLQEL) the chain is Cytoplasmic.

This sequence belongs to the organo anion transporter (TC 2.A.60) family. Expressed in liver, kidney, heart, lung and retina. Widely distributed in all brain regions.

The protein resides in the cell membrane. The protein localises to the basal cell membrane. It is found in the apical cell membrane. The catalysed reaction is coproporphyrin III(out) = coproporphyrin III(in). It carries out the reaction substance P(out) = substance P(in). The enzyme catalyses taurocholate(out) = taurocholate(in). It catalyses the reaction prostaglandin E1(out) = prostaglandin E1(in). The catalysed reaction is prostaglandin E2(out) = prostaglandin E2(in). It carries out the reaction prostaglandin D2(out) = prostaglandin D2(in). The enzyme catalyses leukotriene C4(out) = leukotriene C4(in). It catalyses the reaction L-thyroxine(out) = L-thyroxine(in). In terms of biological role, mediates the Na(+)-independent transport of organic anions such as taurocholate, the prostaglandins D2 (PGD2), E1 (PGE1) and E2 (PGE2), leukotriene C4, thromboxane B2 and L-thyroxine. Also plays a role in the reuptake of neuropeptides such as substance P/TAC1 and vasoactive intestinal peptide/VIP released from retinal neurons. May act as a heme transporter that promotes cellular iron availability. Also transports heme by-product coproporphyrin III (CPIII), and may be involved in their hepatic disposition. May contribute to regulate the transport of organic compounds in testis across the blood-testis-barrier. Shows a pH-sensitive substrate specificity which may be ascribed to the protonation state of the binding site and leads to a stimulation of substrate transport in an acidic microenvironment. The exact transport mechanism has not been yet deciphered but most likely involves an anion exchange, coupling the cellular uptake of organic substrate with the efflux of an anionic compound. Hydrogencarbonate/HCO3(-) acts as a probable counteranion that exchanges for organic anions. Cytoplasmic glutamate may also act as counteranion in the placenta. The protein is Solute carrier organic anion transporter family member 2B1 of Rattus norvegicus (Rat).